The sequence spans 89 residues: Small ribosomal subunit protein uS15 (89 aa).

The segment at 1 to 23 (MALTKERTASVVQQYGSGEKDTG) is disordered.

The protein belongs to the universal ribosomal protein uS15 family. As to quaternary structure, part of the 30S ribosomal subunit. Forms a bridge to the 50S subunit in the 70S ribosome, contacting the 23S rRNA.

Functionally, one of the primary rRNA binding proteins, it binds directly to 16S rRNA where it helps nucleate assembly of the platform of the 30S subunit by binding and bridging several RNA helices of the 16S rRNA. In terms of biological role, forms an intersubunit bridge (bridge B4) with the 23S rRNA of the 50S subunit in the ribosome. The protein is Small ribosomal subunit protein uS15 of Treponema pallidum (strain Nichols).